The sequence spans 90 residues: DNA-binding protein HU-alpha (90 aa).

This sequence belongs to the bacterial histone-like protein family. In terms of assembly, heterodimer of an alpha and a beta chain.

Functionally, histone-like DNA-binding protein which is capable of wrapping DNA to stabilize it, and thus to prevent its denaturation under extreme environmental conditions. The chain is DNA-binding protein HU-alpha (hupA) from Salmonella typhi.